The primary structure comprises 309 residues: UPF0282 protein Saci_0277 (309 aa).

The protein belongs to the UPF0282 family.

The chain is UPF0282 protein Saci_0277 from Sulfolobus acidocaldarius (strain ATCC 33909 / DSM 639 / JCM 8929 / NBRC 15157 / NCIMB 11770).